The chain runs to 116 residues: Immunoglobulin heavy variable 3-66 (116 aa).

A signal peptide spans M1–C19. The interval E20–S44 is framework-1. Residues E20–R116 form the Ig-like domain. C41 and C114 form a disulfide bridge. The complementarity-determining-1 stretch occupies residues G45–Y52. The tract at residues M53–V69 is framework-2. The segment at I70 to T76 is complementarity-determining-2. A framework-3 region spans residues Y77–C114. The complementarity-determining-3 stretch occupies residues A115 to R116.

Immunoglobulins are composed of two identical heavy chains and two identical light chains; disulfide-linked.

It is found in the secreted. The protein resides in the cell membrane. V region of the variable domain of immunoglobulin heavy chains that participates in the antigen recognition. Immunoglobulins, also known as antibodies, are membrane-bound or secreted glycoproteins produced by B lymphocytes. In the recognition phase of humoral immunity, the membrane-bound immunoglobulins serve as receptors which, upon binding of a specific antigen, trigger the clonal expansion and differentiation of B lymphocytes into immunoglobulins-secreting plasma cells. Secreted immunoglobulins mediate the effector phase of humoral immunity, which results in the elimination of bound antigens. The antigen binding site is formed by the variable domain of one heavy chain, together with that of its associated light chain. Thus, each immunoglobulin has two antigen binding sites with remarkable affinity for a particular antigen. The variable domains are assembled by a process called V-(D)-J rearrangement and can then be subjected to somatic hypermutations which, after exposure to antigen and selection, allow affinity maturation for a particular antigen. This Homo sapiens (Human) protein is Immunoglobulin heavy variable 3-66.